The primary structure comprises 96 residues: Large ribosomal subunit protein uL23 (96 aa).

It belongs to the universal ribosomal protein uL23 family. Part of the 50S ribosomal subunit. Contacts protein L29, and trigger factor when it is bound to the ribosome.

Functionally, one of the early assembly proteins it binds 23S rRNA. One of the proteins that surrounds the polypeptide exit tunnel on the outside of the ribosome. Forms the main docking site for trigger factor binding to the ribosome. This is Large ribosomal subunit protein uL23 from Alkaliphilus metalliredigens (strain QYMF).